The sequence spans 939 residues: Isoleucine--tRNA ligase (939 aa).

The 'HIGH' region motif lies at 57–67; sequence PYANGEIHIGH. Glu-563 contacts L-isoleucyl-5'-AMP. A 'KMSKS' region motif is present at residues 604–608; it reads KMSKS. Lys-607 is a binding site for ATP. 4 residues coordinate Zn(2+): Cys-902, Cys-905, Cys-922, and Cys-925.

It belongs to the class-I aminoacyl-tRNA synthetase family. IleS type 1 subfamily. Monomer. The cofactor is Zn(2+).

It is found in the cytoplasm. It catalyses the reaction tRNA(Ile) + L-isoleucine + ATP = L-isoleucyl-tRNA(Ile) + AMP + diphosphate. In terms of biological role, catalyzes the attachment of isoleucine to tRNA(Ile). As IleRS can inadvertently accommodate and process structurally similar amino acids such as valine, to avoid such errors it has two additional distinct tRNA(Ile)-dependent editing activities. One activity is designated as 'pretransfer' editing and involves the hydrolysis of activated Val-AMP. The other activity is designated 'posttransfer' editing and involves deacylation of mischarged Val-tRNA(Ile). The chain is Isoleucine--tRNA ligase from Methylococcus capsulatus (strain ATCC 33009 / NCIMB 11132 / Bath).